We begin with the raw amino-acid sequence, 559 residues long: Acetolactate synthase, catabolic (559 aa).

Residues Arg-159, 263–284 (FNNQAGDRLLRQADLIICIGYS), and 304–323 (DVLPAYEERNYVPDIELVGD) each bind FAD. Asp-447 serves as a coordination point for Mg(2+).

This sequence belongs to the TPP enzyme family. In terms of assembly, homodimer.

It carries out the reaction 2 pyruvate + H(+) = (2S)-2-acetolactate + CO2. Its pathway is polyol metabolism; (R,R)-butane-2,3-diol biosynthesis; (R,R)-butane-2,3-diol from pyruvate: step 1/3. The sequence is that of Acetolactate synthase, catabolic (budB) from Raoultella terrigena (Klebsiella terrigena).